We begin with the raw amino-acid sequence, 484 residues long: Glutamate--tRNA ligase (484 aa).

A 'HIGH' region motif is present at residues 11–21 (PSPTGYLHIGN). Positions 252–256 (KLSKR) match the 'KMSKS' region motif. K255 is an ATP binding site.

The protein belongs to the class-I aminoacyl-tRNA synthetase family. Glutamate--tRNA ligase type 1 subfamily. Monomer.

It localises to the cytoplasm. The catalysed reaction is tRNA(Glu) + L-glutamate + ATP = L-glutamyl-tRNA(Glu) + AMP + diphosphate. In terms of biological role, catalyzes the attachment of glutamate to tRNA(Glu) in a two-step reaction: glutamate is first activated by ATP to form Glu-AMP and then transferred to the acceptor end of tRNA(Glu). The sequence is that of Glutamate--tRNA ligase from Staphylococcus aureus (strain COL).